The primary structure comprises 366 residues: Chorismate synthase (366 aa).

NADP(+) is bound at residue Arg48. Residues 131–133 (RAS), 243–244 (NA), Gly288, 303–307 (KPTSS), and Arg329 contribute to the FMN site.

This sequence belongs to the chorismate synthase family. In terms of assembly, homotetramer. Requires FMNH2 as cofactor.

It catalyses the reaction 5-O-(1-carboxyvinyl)-3-phosphoshikimate = chorismate + phosphate. It participates in metabolic intermediate biosynthesis; chorismate biosynthesis; chorismate from D-erythrose 4-phosphate and phosphoenolpyruvate: step 7/7. Its function is as follows. Catalyzes the anti-1,4-elimination of the C-3 phosphate and the C-6 proR hydrogen from 5-enolpyruvylshikimate-3-phosphate (EPSP) to yield chorismate, which is the branch point compound that serves as the starting substrate for the three terminal pathways of aromatic amino acid biosynthesis. This reaction introduces a second double bond into the aromatic ring system. The protein is Chorismate synthase of Bartonella henselae (strain ATCC 49882 / DSM 28221 / CCUG 30454 / Houston 1) (Rochalimaea henselae).